The sequence spans 235 residues: NifU-like protein 2, chloroplastic (235 aa).

The N-terminal 16 residues, 1–16, are a transit peptide targeting the chloroplast; the sequence is MQLLTLNPAAISRTPP.

The protein belongs to the NifU family. Homodimer; disulfide-linked. Requires [2Fe-2S] cluster as cofactor. As to expression, predominantly expressed in leaves and floral stalks. Ubiquitous (at protein level).

The protein localises to the plastid. It localises to the chloroplast stroma. Its function is as follows. Molecular scaffold for [Fe-S] cluster assembly of chloroplastic iron-sulfur proteins. Required for biogenesis of ferredoxin, a major photosynthetic electron carrier containing [2Fe-2S] cluster. Required for the assembly of photosystem I complex. This is NifU-like protein 2, chloroplastic (NIFU2) from Arabidopsis thaliana (Mouse-ear cress).